The chain runs to 208 residues: UPF0637 protein BCQ_3749 (208 aa).

The protein belongs to the UPF0637 family.

The sequence is that of UPF0637 protein BCQ_3749 from Bacillus cereus (strain Q1).